Consider the following 454-residue polypeptide: Sensor histidine kinase RppB (454 aa).

Topologically, residues 1 to 13 (MNTRRLFARSRLQ) are periplasmic. The helical transmembrane segment at 14–34 (LAFWYALVMGGILTLLGLGVY) threads the bilayer. The Cytoplasmic portion of the chain corresponds to 35–186 (RAIVQANWMA…LAAFDAENKR (152 aa)). The chain crosses the membrane as a helical span at residues 187-207 (ILWILGLSFPIALGLVAFSSW). At 208-454 (GLAGLAMRPI…PIFSVPIVHS (247 aa)) the chain is on the periplasmic side. The region spanning 230-448 (NAAHELRSPL…LFTIQLPIFS (219 aa)) is the Histidine kinase domain. Phosphohistidine; by autocatalysis is present on His233.

The protein localises to the cell inner membrane. It carries out the reaction ATP + protein L-histidine = ADP + protein N-phospho-L-histidine.. Functionally, member of two-component regulatory system RppA/RppB, involved in the establishment of the appropriate stoichiometry between the 2 photosystems. It senses changes in the plastoquinone (PQ) redox poise. Another group shows this two-component pair, renamed NrsR/NrsS, controls the nickel-dependent expression of the nrsBACD operon; they suggest the photosystem-related activities seen earlier are due to the expression of NrsS (RppB) in the absence of its natural substrate NrsR (RppA). The polypeptide is Sensor histidine kinase RppB (Synechocystis sp. (strain ATCC 27184 / PCC 6803 / Kazusa)).